Consider the following 434-residue polypeptide: Lipoyl synthase, mitochondrial (434 aa).

A mitochondrion-targeting transit peptide spans 1 to 31 (MAASARGLRTLQSAHSSTTVPRLQLAVSRCY). Residues 34-54 (TTSPDPPITNSSNSSNSTPTP) are compositionally biased toward low complexity. Residues 34–55 (TTSPDPPITNSSNSSNSTPTPK) are disordered. Positions 144, 149, 155, 175, 179, 182, and 390 each coordinate [4Fe-4S] cluster. One can recognise a Radical SAM core domain in the interval 158–379 (GSSKSAATAT…KERALEMGFL (222 aa)).

The protein belongs to the radical SAM superfamily. Lipoyl synthase family. [4Fe-4S] cluster serves as cofactor.

The protein resides in the mitochondrion. It carries out the reaction [[Fe-S] cluster scaffold protein carrying a second [4Fe-4S](2+) cluster] + N(6)-octanoyl-L-lysyl-[protein] + 2 oxidized [2Fe-2S]-[ferredoxin] + 2 S-adenosyl-L-methionine + 4 H(+) = [[Fe-S] cluster scaffold protein] + N(6)-[(R)-dihydrolipoyl]-L-lysyl-[protein] + 4 Fe(3+) + 2 hydrogen sulfide + 2 5'-deoxyadenosine + 2 L-methionine + 2 reduced [2Fe-2S]-[ferredoxin]. The protein operates within protein modification; protein lipoylation via endogenous pathway; protein N(6)-(lipoyl)lysine from octanoyl-[acyl-carrier-protein]: step 2/2. Catalyzes the radical-mediated insertion of two sulfur atoms into the C-6 and C-8 positions of the octanoyl moiety bound to the lipoyl domains of lipoate-dependent enzymes, thereby converting the octanoylated domains into lipoylated derivatives. In Paracoccidioides brasiliensis (strain Pb03), this protein is Lipoyl synthase, mitochondrial.